The following is a 115-amino-acid chain: U3-lycotoxin-Ls1h (115 aa).

The first 20 residues, 1–20, serve as a signal peptide directing secretion; it reads MKFVLLFGVFLVTLFSYSSA. The propeptide occupies 21–44; sequence EMLDDFDQADEDELLSLIEKEEAR. Disulfide bonds link cysteine 48-cysteine 63, cysteine 55-cysteine 72, cysteine 62-cysteine 87, and cysteine 74-cysteine 85.

The protein belongs to the neurotoxin 19 (CSTX) family. 01 subfamily. As to expression, expressed by the venom gland.

It localises to the secreted. The polypeptide is U3-lycotoxin-Ls1h (Lycosa singoriensis (Wolf spider)).